A 459-amino-acid chain; its full sequence is FBD-associated F-box protein At5g27750 (459 aa).

Positions 4–50 (FDRISELPESLITQILLCLPTKDSVKTSVLSTRWKNLWLNVPGLDLT) constitute an F-box domain. One can recognise an FBD domain in the interval 374 to 426 (TEELNLINVPRCIVSTLECVEIKGLFEWEEEEMKIARYFLENAAVLKKLTMSF).

In Arabidopsis thaliana (Mouse-ear cress), this protein is FBD-associated F-box protein At5g27750.